Reading from the N-terminus, the 329-residue chain is Proline/serine-rich coiled-coil protein 1 (329 aa).

Ser-22 bears the Phosphoserine mark. Residues 38 to 41 (PEKP) form repeat 1. Residues Ser-47, Ser-65, and Ser-70 each carry the phosphoserine modification. 2 tandem repeats follow at residues 68–71 (PLSP) and 103–106 (PGRP). The tract at residues 68–215 (PLSPEKLEEI…ARTVASPPIP (148 aa)) is 5 X 4 AA repeats of P-X-X-P. Residues 70–94 (SPEKLEEILDEANRLAAQLEECALK) are a coiled coil. Positions 94–329 (KDSENAAAGP…RKAAVPGPTR (236 aa)) are disordered. A compositionally biased stretch (basic and acidic residues) spans 114-126 (PRRETFVLKDSPV). Ser-124 bears the Phosphoserine mark. Composition is skewed to polar residues over residues 132–148 (TVSSWSAPPPSNLTGLR) and 175–186 (PTCNLFSASKNP). Position 145 is a phosphothreonine (Thr-145). At Ser-189 the chain carries Phosphoserine. Tandem repeats lie at residues 194–197 (PTLP) and 212–215 (PPIP). Low complexity-rich tracts occupy residues 219–231 (APQSSASNSQCSS) and 302–315 (GAARGRTSSAARGR).

The protein belongs to the PSRC1 family. In terms of assembly, interacts with APC2. Interacts with KIF2A. Interacts with ANKRD53; recruits ANKRD53 to the spindle during mitosis. In terms of processing, phosphorylated during mitosis.

It is found in the cytoplasm. Its subcellular location is the cytoskeleton. It localises to the spindle. The protein localises to the spindle pole. Functionally, required for normal progression through mitosis. Required for normal congress of chromosomes at the metaphase plate, and for normal rate of chromosomal segregation during anaphase. Plays a role in the regulation of mitotic spindle dynamics. Increases the rate of turnover of microtubules on metaphase spindles, and contributes to the generation of normal tension across sister kinetochores. Recruits KIF2A and ANKRD53 to the mitotic spindle and spindle poles. May participate in p53/TP53-regulated growth suppression. This Rattus norvegicus (Rat) protein is Proline/serine-rich coiled-coil protein 1 (Psrc1).